The chain runs to 347 residues: Nuclear distribution protein nudE-like 1 (347 aa).

Residues 28–190 (QSFQEARDEL…LAVRERQQEV (163 aa)) adopt a coiled-coil conformation. A self-association region spans residues 56-166 (VQAEQRNRDL…LDEKESLLVS (111 aa)). Positions 64–189 (DLQADNQRLK…ELAVRERQQE (126 aa)) are interaction with KATNB1. A required for interaction with PAFAH1B1 region spans residues 114-133 (YVRELEQANDDLERAKRATI). Residues 175 to 347 (RDLRQELAVR…SAPGMLPLSV (173 aa)) are interaction with CENPF. Residues 189-256 (EVTRKSAPSS…SARISALNIV (68 aa)) form an interaction with YWHAE region. Residues 191–347 (TRKSAPSSPT…SAPGMLPLSV (157 aa)) form an interaction with NEFL region. The segment at 195–256 (APSSPTLDCE…SARISALNIV (62 aa)) is interaction with KATNA1. Position 215 is a phosphoserine (Ser-215). Thr-219 is subject to Phosphothreonine; by CDK1 and MAPK1. Residue Ser-231 is modified to Phosphoserine. The tract at residues 241 to 280 (TSPLTPSARISALNIVGDLLRKVGALESKLAACRNFAKDQ) is interaction with DISC1. Phosphoserine; by CDK1 is present on Ser-242. The residue at position 245 (Thr-245) is a Phosphothreonine; by CDK1 and MAPK1. Residues 256–291 (VGDLLRKVGALESKLAACRNFAKDQASRKSYISGNV) are required for localization to the centrosome and interaction with dynein, dynactin, tubulin gamma, PCM1 and PCNT. The S-palmitoyl cysteine; by ZDHHC2, ZDHHC3 and ZDHHC7 moiety is linked to residue Cys-273. A disordered region spans residues 314–347 (KGAVNGFDPAPPPPDPGLGSSRPSSAPGMLPLSV). At Ser-346 the chain carries Phosphoserine.

This sequence belongs to the nudE family. In terms of assembly, self-associates. Interacts with DISC1, dynein, dynactin, tubulin gamma, KATNA1, KATNB1, microtubules, PAFAH1B1, PCM1, PCNT, and YWHAE. Interacts directly with NEFL and indirectly with NEFH. Interacts (via C-terminus) with CENPF. Interacts with ZNF365. Interacts with PLEKHM1 (via N- and C-terminus). Interacts with GTP-bound RAB9A; the interaction may lead to RAB9A-dynein motor tethering. Post-translationally, phosphorylated in mitosis. Can be phosphorylated by CDK1, CDK5 and MAPK1. Phosphorylation by CDK5 promotes interaction with KATNA1 and YWHAE. In terms of processing, palmitoylation at Cys-273 reduces affinity for dynein.

It is found in the cytoplasm. The protein localises to the cytoskeleton. The protein resides in the microtubule organizing center. It localises to the centrosome. Its subcellular location is the chromosome. It is found in the centromere. The protein localises to the kinetochore. The protein resides in the spindle. Required for organization of the cellular microtubule array and microtubule anchoring at the centrosome. May regulate microtubule organization at least in part by targeting the microtubule severing protein KATNA1 to the centrosome. Also positively regulates the activity of the minus-end directed microtubule motor protein dynein. May enhance dynein-mediated microtubule sliding by targeting dynein to the microtubule plus ends. Required for several dynein- and microtubule-dependent processes such as the maintenance of Golgi integrity, the centripetal motion of secretory vesicles and the coupling of the nucleus and centrosome. Also required during brain development for the migration of newly formed neurons from the ventricular/subventricular zone toward the cortical plate. Required for mitosis in some cell types but appears to be dispensible for mitosis in cortical neuronal progenitors, which instead requires NDE1. Facilitates the polymerization of neurofilaments from the individual subunits NEFH and NEFL. Positively regulates lysosome peripheral distribution and ruffled border formation in osteoclasts. Plays a role, together with DISC1, in the regulation of neurite outgrowth. May act as a RAB9A/B effector that tethers RAB9-associated late endosomes to the dynein motor for their retrograde transport to the trans-Golgi network. The polypeptide is Nuclear distribution protein nudE-like 1 (NDEL1) (Macaca fascicularis (Crab-eating macaque)).